The chain runs to 118 residues: Holo-[acyl-carrier-protein] synthase (118 aa).

Mg(2+) is bound by residues D8 and E58.

It belongs to the P-Pant transferase superfamily. AcpS family. The cofactor is Mg(2+).

Its subcellular location is the cytoplasm. The enzyme catalyses apo-[ACP] + CoA = holo-[ACP] + adenosine 3',5'-bisphosphate + H(+). Its function is as follows. Transfers the 4'-phosphopantetheine moiety from coenzyme A to a Ser of acyl-carrier-protein. The polypeptide is Holo-[acyl-carrier-protein] synthase (Streptococcus equi subsp. zooepidemicus (strain MGCS10565)).